A 214-amino-acid polypeptide reads, in one-letter code: 3,4-dihydroxy-2-butanone 4-phosphate synthase (214 aa).

Residues 37 to 38 (RE), D42, 150 to 154 (RPGHT), and E174 contribute to the D-ribulose 5-phosphate site. Mg(2+) is bound at residue E38. H153 provides a ligand contact to Mg(2+).

This sequence belongs to the DHBP synthase family. In terms of assembly, homodimer. Requires Mg(2+) as cofactor. The cofactor is Mn(2+).

The catalysed reaction is D-ribulose 5-phosphate = (2S)-2-hydroxy-3-oxobutyl phosphate + formate + H(+). Its pathway is cofactor biosynthesis; riboflavin biosynthesis; 2-hydroxy-3-oxobutyl phosphate from D-ribulose 5-phosphate: step 1/1. Functionally, catalyzes the conversion of D-ribulose 5-phosphate to formate and 3,4-dihydroxy-2-butanone 4-phosphate. The sequence is that of 3,4-dihydroxy-2-butanone 4-phosphate synthase from Mannheimia succiniciproducens (strain KCTC 0769BP / MBEL55E).